An 89-amino-acid chain; its full sequence is Small ribosomal subunit protein uS15 (89 aa).

Basic and acidic residues predominate over residues 1 to 21 (MSITTEEKARVMKEYGTKDGD). The interval 1–24 (MSITTEEKARVMKEYGTKDGDTGS) is disordered.

It belongs to the universal ribosomal protein uS15 family. As to quaternary structure, part of the 30S ribosomal subunit. Forms a bridge to the 50S subunit in the 70S ribosome, contacting the 23S rRNA.

Its function is as follows. One of the primary rRNA binding proteins, it binds directly to 16S rRNA where it helps nucleate assembly of the platform of the 30S subunit by binding and bridging several RNA helices of the 16S rRNA. In terms of biological role, forms an intersubunit bridge (bridge B4) with the 23S rRNA of the 50S subunit in the ribosome. The protein is Small ribosomal subunit protein uS15 of Ruegeria pomeroyi (strain ATCC 700808 / DSM 15171 / DSS-3) (Silicibacter pomeroyi).